The primary structure comprises 122 residues: uncharacterized protein (122 aa).

Disordered regions lie at residues 1–30 (MGRE…DQPE) and 96–122 (FKSC…DAMG).

This is an uncharacterized protein from Homo sapiens (Human).